Reading from the N-terminus, the 132-residue chain is DNA-directed RNA polymerase subunit omega (132 aa).

The segment at 89–109 is disordered; it reads HSSESESIFNTSSQEEGTSFD. Over residues 96 to 105 the composition is skewed to polar residues; the sequence is IFNTSSQEEG.

This sequence belongs to the RNA polymerase subunit omega family. In terms of assembly, the RNAP catalytic core consists of 2 alpha, 1 beta, 1 beta' and 1 omega subunit. When a sigma factor is associated with the core the holoenzyme is formed, which can initiate transcription.

It carries out the reaction RNA(n) + a ribonucleoside 5'-triphosphate = RNA(n+1) + diphosphate. Its function is as follows. Promotes RNA polymerase assembly. Latches the N- and C-terminal regions of the beta' subunit thereby facilitating its interaction with the beta and alpha subunits. In Bartonella tribocorum (strain CIP 105476 / IBS 506), this protein is DNA-directed RNA polymerase subunit omega.